Here is a 332-residue protein sequence, read N- to C-terminus: Adenosine receptor A2b (332 aa).

The Extracellular segment spans residues 1–8; sequence MQLETQDA. A helical membrane pass occupies residues 9 to 33; sequence LYVALELAIAALSVAGNVLVCAAVG. The Cytoplasmic portion of the chain corresponds to 34-43; it reads TSSALQTPTN. The helical transmembrane segment at 44-67 threads the bilayer; the sequence is YFLVSLAAADVAVGLFAIPFAITI. The Extracellular portion of the chain corresponds to 68–78; that stretch reads SLGFCTDFHSC. Cys-78 and Cys-170 are joined by a disulfide. The helical transmembrane segment at 79–101 threads the bilayer; that stretch reads LFLACFVLVLTQSSIFSLLAVAV. The Cytoplasmic portion of the chain corresponds to 102 to 121; the sequence is DRYLAIRVPLRYKSLVTGTR. The chain crosses the membrane as a helical span at residues 122 to 144; it reads ARGVIAVLWVLAFGIGLTPFLGW. Over 145-177 the chain is Extracellular; the sequence is NSKDSATNCTEPWDGTTNESCCLVKCLFENVVP. Residues Asn-152 and Asn-162 are each glycosylated (N-linked (GlcNAc...) asparagine). Glu-173 contacts adenosine. Residues 178–202 form a helical membrane-spanning segment; it reads MSYMVYFNFFGCVLPPLLIMLVIYI. Topologically, residues 203–234 are cytoplasmic; that stretch reads KIFMVACKQLQRTELVDHSRTVIQREIHAAKS. A helical transmembrane segment spans residues 235 to 258; the sequence is LAMIVGIFALCWLPVHAINCVTLF. Asn-253 is an adenosine binding site. Over 259–266 the chain is Extracellular; the sequence is QPARAKDK. Residues 267–290 traverse the membrane as a helical segment; it reads PKWAMNMAILLSHASSVVNPIVYA. Adenosine is bound by residues Ser-278 and His-279. The Cytoplasmic segment spans residues 291–332; it reads YRNRDFRYTFHKIISRYVLCQTDVLKSGNGQAGTQSALDVGL. The S-palmitoyl cysteine moiety is linked to residue Cys-310.

It belongs to the G-protein coupled receptor 1 family.

Its subcellular location is the cell membrane. Receptor for adenosine. The activity of this receptor is mediated by G proteins which activate adenylyl cyclase. In Canis lupus familiaris (Dog), this protein is Adenosine receptor A2b (ADORA2B).